Here is a 132-residue protein sequence, read N- to C-terminus: Small ribosomal subunit protein uS8 (132 aa).

The protein belongs to the universal ribosomal protein uS8 family. As to quaternary structure, part of the 30S ribosomal subunit. Contacts proteins S5 and S12.

Functionally, one of the primary rRNA binding proteins, it binds directly to 16S rRNA central domain where it helps coordinate assembly of the platform of the 30S subunit. This is Small ribosomal subunit protein uS8 from Maricaulis maris (strain MCS10) (Caulobacter maris).